The chain runs to 211 residues: MDETLKDLAAHVTGALPGAVVAHKIAYGELTLETTPDHILKLATFLRDDPSCLFTCIVDVCGADYPAREQRFEVVYHLLSLKQNARVRVKLSAGEETLVPSVTGIWPGANWFEREAYDLYGILFTGHPELRRLLTDYGFDGHPLRKDFPLTGFVEVRYDDELKRVVYEPVRLAQEFRNFDFLSPWEGVEYILPGDEKASSQPGAPAAPKAS.

This sequence belongs to the complex I 30 kDa subunit family. NDH-1 is composed of 14 different subunits. Subunits NuoB, C, D, E, F, and G constitute the peripheral sector of the complex.

The protein resides in the cell inner membrane. It catalyses the reaction a quinone + NADH + 5 H(+)(in) = a quinol + NAD(+) + 4 H(+)(out). Functionally, NDH-1 shuttles electrons from NADH, via FMN and iron-sulfur (Fe-S) centers, to quinones in the respiratory chain. The immediate electron acceptor for the enzyme in this species is believed to be ubiquinone. Couples the redox reaction to proton translocation (for every two electrons transferred, four hydrogen ions are translocated across the cytoplasmic membrane), and thus conserves the redox energy in a proton gradient. This is NADH-quinone oxidoreductase subunit C from Azorhizobium caulinodans (strain ATCC 43989 / DSM 5975 / JCM 20966 / LMG 6465 / NBRC 14845 / NCIMB 13405 / ORS 571).